The primary structure comprises 641 residues: Single-strand DNA endonuclease 1 (641 aa).

The interval 1 to 90 (MGVKNLWDIL…SLKLATYRRR (90 aa)) is N-domain. The segment at 2–97 (GVKNLWDILE…RRRLGSISHA (96 aa)) is XPG-N domain. Asp30, Asp76, Glu144, Glu146, Asp165, Asp167, and Asp217 together coordinate Mg(2+). Residues 132–217 (MALGIPCLDG…ISLAVLLGSD (86 aa)) form an XPG-I domain region. I-domain regions lie at residues 132-220 (MALG…DYSN) and 132-221 (MALG…YSNG). The segment at 217–350 (DYSNGVNGFG…ILPKIAEREL (134 aa)) is 5'-3' exonuclease domain. Disordered regions lie at residues 428–448 (KGEEKKQKRRARPKKSGQAAV) and 572–615 (VGSH…RVHH). A compositionally biased stretch (gly residues) spans 580 to 590 (DGGGGGGGGVA).

The protein belongs to the XPG/RAD2 endonuclease family. GEN subfamily. Mg(2+) serves as cofactor. As to expression, highly expressed in shoot apical meristem (SAM) and young leaves. Expressed in roots, flag leaf and panicles.

The protein localises to the nucleus. In terms of biological role, single-stranded DNA endonuclease activity in vitro. May not be active as double-stranded DNA endonuclease. Endonuclease which cleaves flap structures at the junction between single-stranded DNA and double-stranded DNA with a specific cleavage site in the 5' overhang strand exactly one nucleotide 3' of the branch point. Structure- and sequence-specific nuclease that resolves holliday junctions (HJs) by symmetrically oriented incisions in two opposing strands near the junction point, thus leading to ligatable products; HJs are physical links between homologous DNA molecules that arise as central intermediary structures during homologous recombination and repair in meiotic and somatic cells. Probably involved in the resolution of toxic replication structures to ensure genome stability, and to maintain telomere integrity and replication. This Oryza sativa subsp. japonica (Rice) protein is Single-strand DNA endonuclease 1.